The following is a 200-amino-acid chain: 3-isopropylmalate dehydratase small subunit (200 aa).

Belongs to the LeuD family. LeuD type 1 subfamily. Heterodimer of LeuC and LeuD.

The catalysed reaction is (2R,3S)-3-isopropylmalate = (2S)-2-isopropylmalate. Its pathway is amino-acid biosynthesis; L-leucine biosynthesis; L-leucine from 3-methyl-2-oxobutanoate: step 2/4. Functionally, catalyzes the isomerization between 2-isopropylmalate and 3-isopropylmalate, via the formation of 2-isopropylmaleate. This Campylobacter jejuni (strain RM1221) protein is 3-isopropylmalate dehydratase small subunit.